The primary structure comprises 89 residues: Small ribosomal subunit protein uS15 (89 aa).

This sequence belongs to the universal ribosomal protein uS15 family. In terms of assembly, part of the 30S ribosomal subunit. Forms a bridge to the 50S subunit in the 70S ribosome, contacting the 23S rRNA.

Functionally, one of the primary rRNA binding proteins, it binds directly to 16S rRNA where it helps nucleate assembly of the platform of the 30S subunit by binding and bridging several RNA helices of the 16S rRNA. Forms an intersubunit bridge (bridge B4) with the 23S rRNA of the 50S subunit in the ribosome. The polypeptide is Small ribosomal subunit protein uS15 (Chlamydia pneumoniae (Chlamydophila pneumoniae)).